The sequence spans 156 residues: Small ribosomal subunit protein uS7 (156 aa).

Belongs to the universal ribosomal protein uS7 family. In terms of assembly, part of the 30S ribosomal subunit. Contacts proteins S9 and S11.

In terms of biological role, one of the primary rRNA binding proteins, it binds directly to 16S rRNA where it nucleates assembly of the head domain of the 30S subunit. Is located at the subunit interface close to the decoding center, probably blocks exit of the E-site tRNA. This chain is Small ribosomal subunit protein uS7, found in Aliivibrio fischeri (strain MJ11) (Vibrio fischeri).